Consider the following 1129-residue polypeptide: ISWI chromatin-remodeling complex ATPase ISW1 (1129 aa).

Residues 144 to 177 (KANGKGKGKHQDVRRRKTEHEEDAELLKEEDSDD) form a disordered region. Residues 147-160 (GKGKGKHQDVRRRK) show a composition bias toward basic residues. Residues 164–177 (EEDAELLKEEDSDD) show a composition bias toward acidic residues. One can recognise a Helicase ATP-binding domain in the interval 208–373 (VSLHKNKIAG…WALLNFLLPD (166 aa)). 221–228 (DEMGLGKT) contributes to the ATP binding site. The DEAH box signature appears at 324–327 (DEAH). The 152-residue stretch at 506 to 657 (VLDKLLKKLK…QLVIQQNRTS (152 aa)) folds into the Helicase C-terminal domain. The tract at residues 683 to 705 (FKSGTSTGSAGTPEPGSGEKGDD) is disordered. The residue at position 694 (T694) is a Phosphothreonine. A Phosphoserine modification is found at S846. 2 consecutive SANT domains span residues 882–935 (EGFT…SNIE) and 988–1052 (NKRT…LLQC). Over residues 1073 to 1108 (KEDENGKRIREEFADQTANEKENVDGVESKKAKIED) the composition is skewed to basic and acidic residues. A disordered region spans residues 1073-1129 (KEDENGKRIREEFADQTANEKENVDGVESKKAKIEDTSNVGTEQLVAEKIPENETTH).

Belongs to the SNF2/RAD54 helicase family. ISWI subfamily. In terms of assembly, component of the ISW1A complex, which at least consists of ISW1 and IOC3. Component of the ISW1B complex, which at least consists of ISW1, IOC2 and IOC4.

The protein localises to the nucleus. Functionally, catalytic component of ISW1-type complexes, which act by remodeling the chromatin by catalyzing an ATP-dependent alteration in the structure of nucleosomal DNA. They are involved in coordinating transcriptional repression, activation and elongation phases. The ISW1A complex represses gene expression at initiation through specific positioning of a promoter proximal dinucleosome. The ISW1B complex acts within coding regions to control the amount of RNA polymerase II released into productive elongation and to coordinate elongation with termination and pre-mRNA processing. This is ISWI chromatin-remodeling complex ATPase ISW1 (ISW1) from Saccharomyces cerevisiae (strain ATCC 204508 / S288c) (Baker's yeast).